Consider the following 399-residue polypeptide: Transferrin receptor subunit ESAG6 (399 aa).

The signal sequence occupies residues 1-17 (MRFWFVLLALLGKEIYA). N-linked (GlcNAc...) asparagine glycans are attached at residues N26 and N110. Intrachain disulfides connect C34/C161, C84/C312, and C144/C215. N-linked (GlcNAc...) asparagine glycosylation is found at N235, N250, and N360. N376 carries the GPI-anchor amidated asparagine lipid modification. The propeptide at 377–399 (AAAIHLSVSTAALCRSALLLGVL) is removed in mature form.

As to quaternary structure, heterodimer composed of ESAG6 and ESAG7. N-glycosylated. Glycosylation is dispensable for heterodimer formation and host transferrin binding.

Its subcellular location is the cell membrane. It is found in the flagellar pocket. In terms of biological role, transferrin receptor subunit involved in receptor-mediated acquisition of iron from the environment by binding host TF/transferrin. The chain is Transferrin receptor subunit ESAG6 from Trypanosoma brucei brucei.